The primary structure comprises 1297 residues: Phosphoribosylformylglycinamidine synthase (1297 aa).

The tract at residues 303–329 is disordered; that stretch reads ISPFPGAATGSGGEIRDEGATGRGAKP. 308–319 is a binding site for ATP; the sequence is GAATGSGGEIRD. Residues aspartate 680, glutamate 719, asparagine 723, and aspartate 887 each coordinate Mg(2+). Serine 889 serves as a coordination point for ATP. A Glutamine amidotransferase type-1 domain is found at 1045–1297; it reads IAILREQGVN…RLFRNARMVF (253 aa). Residue cysteine 1138 is the Nucleophile of the active site. Active-site residues include histidine 1263 and glutamate 1265.

The protein in the N-terminal section; belongs to the FGAMS family. As to quaternary structure, monomer.

Its subcellular location is the cytoplasm. It catalyses the reaction N(2)-formyl-N(1)-(5-phospho-beta-D-ribosyl)glycinamide + L-glutamine + ATP + H2O = 2-formamido-N(1)-(5-O-phospho-beta-D-ribosyl)acetamidine + L-glutamate + ADP + phosphate + H(+). The protein operates within purine metabolism; IMP biosynthesis via de novo pathway; 5-amino-1-(5-phospho-D-ribosyl)imidazole from N(2)-formyl-N(1)-(5-phospho-D-ribosyl)glycinamide: step 1/2. Its function is as follows. Phosphoribosylformylglycinamidine synthase involved in the purines biosynthetic pathway. Catalyzes the ATP-dependent conversion of formylglycinamide ribonucleotide (FGAR) and glutamine to yield formylglycinamidine ribonucleotide (FGAM) and glutamate. The sequence is that of Phosphoribosylformylglycinamidine synthase from Haemophilus influenzae (strain 86-028NP).